A 906-amino-acid chain; its full sequence is Protein transport protein SEC24-2 (906 aa).

Residues C222, C225, C244, and C247 each contribute to the Zn(2+) site. Residues 222 to 247 (CRRCRSYMNPFVTFIEQGRRWRCNFC) form a zinc finger-like region.

Belongs to the SEC23/SEC24 family. SEC24 subfamily. The COPII coat is composed of at least 5 proteins: the SEC23/24 complex, the SEC13/31 complex, and the protein SAR1. Golgi apparatus membrane; Peripheral membrane protein; Cytoplasmic side.

The protein localises to the cytoplasm. It localises to the cytoplasmic vesicle. Its subcellular location is the COPII-coated vesicle membrane. The protein resides in the endoplasmic reticulum membrane. It is found in the golgi apparatus membrane. In terms of biological role, component of the coat protein complex II (COPII) which promotes the formation of transport vesicles from the endoplasmic reticulum (ER). The coat has two main functions, the physical deformation of the endoplasmic reticulum membrane into vesicles and the selection of cargo molecules. This chain is Protein transport protein SEC24-2 (SEC242), found in Candida glabrata (strain ATCC 2001 / BCRC 20586 / JCM 3761 / NBRC 0622 / NRRL Y-65 / CBS 138) (Yeast).